A 389-amino-acid chain; its full sequence is Tryptophan synthase beta chain (389 aa).

The residue at position 84 (Lys-84) is an N6-(pyridoxal phosphate)lysine.

The protein belongs to the TrpB family. As to quaternary structure, tetramer of two alpha and two beta chains. Requires pyridoxal 5'-phosphate as cofactor.

The catalysed reaction is (1S,2R)-1-C-(indol-3-yl)glycerol 3-phosphate + L-serine = D-glyceraldehyde 3-phosphate + L-tryptophan + H2O. It participates in amino-acid biosynthesis; L-tryptophan biosynthesis; L-tryptophan from chorismate: step 5/5. The beta subunit is responsible for the synthesis of L-tryptophan from indole and L-serine. This chain is Tryptophan synthase beta chain, found in Methanococcus aeolicus (strain ATCC BAA-1280 / DSM 17508 / OCM 812 / Nankai-3).